A 147-amino-acid polypeptide reads, in one-letter code: 3-dehydroquinate dehydratase 1 (147 aa).

The Proton acceptor role is filled by Tyr23. The substrate site is built by Asn75, His81, and Asp88. Catalysis depends on His101, which acts as the Proton donor. Substrate-binding positions include 102-103 and Arg112; that span reads LS.

It belongs to the type-II 3-dehydroquinase family. Homododecamer.

The catalysed reaction is 3-dehydroquinate = 3-dehydroshikimate + H2O. The protein operates within metabolic intermediate biosynthesis; chorismate biosynthesis; chorismate from D-erythrose 4-phosphate and phosphoenolpyruvate: step 3/7. Functionally, catalyzes a trans-dehydration via an enolate intermediate. The polypeptide is 3-dehydroquinate dehydratase 1 (aroQ1) (Pseudomonas aeruginosa (strain ATCC 15692 / DSM 22644 / CIP 104116 / JCM 14847 / LMG 12228 / 1C / PRS 101 / PAO1)).